A 197-amino-acid polypeptide reads, in one-letter code: Probable nicotinate-nucleotide adenylyltransferase (197 aa).

The protein belongs to the NadD family.

The catalysed reaction is nicotinate beta-D-ribonucleotide + ATP + H(+) = deamido-NAD(+) + diphosphate. The protein operates within cofactor biosynthesis; NAD(+) biosynthesis; deamido-NAD(+) from nicotinate D-ribonucleotide: step 1/1. Catalyzes the reversible adenylation of nicotinate mononucleotide (NaMN) to nicotinic acid adenine dinucleotide (NaAD). The polypeptide is Probable nicotinate-nucleotide adenylyltransferase (Thermosipho melanesiensis (strain DSM 12029 / CIP 104789 / BI429)).